Here is a 366-residue protein sequence, read N- to C-terminus: Ribosomal RNA large subunit methyltransferase M (366 aa).

Residues S188, 221–224 (CPGG), D240, D260, and D277 contribute to the S-adenosyl-L-methionine site. Catalysis depends on K306, which acts as the Proton acceptor.

This sequence belongs to the class I-like SAM-binding methyltransferase superfamily. RNA methyltransferase RlmE family. RlmM subfamily. In terms of assembly, monomer.

The protein resides in the cytoplasm. It carries out the reaction cytidine(2498) in 23S rRNA + S-adenosyl-L-methionine = 2'-O-methylcytidine(2498) in 23S rRNA + S-adenosyl-L-homocysteine + H(+). In terms of biological role, catalyzes the 2'-O-methylation at nucleotide C2498 in 23S rRNA. The protein is Ribosomal RNA large subunit methyltransferase M of Pectobacterium carotovorum subsp. carotovorum (strain PC1).